The chain runs to 260 residues: Imidazole glycerol phosphate synthase subunit HisF (260 aa).

Catalysis depends on residues Asp-11 and Asp-130.

Belongs to the HisA/HisF family. Heterodimer of HisH and HisF.

The protein resides in the cytoplasm. It carries out the reaction 5-[(5-phospho-1-deoxy-D-ribulos-1-ylimino)methylamino]-1-(5-phospho-beta-D-ribosyl)imidazole-4-carboxamide + L-glutamine = D-erythro-1-(imidazol-4-yl)glycerol 3-phosphate + 5-amino-1-(5-phospho-beta-D-ribosyl)imidazole-4-carboxamide + L-glutamate + H(+). It participates in amino-acid biosynthesis; L-histidine biosynthesis; L-histidine from 5-phospho-alpha-D-ribose 1-diphosphate: step 5/9. IGPS catalyzes the conversion of PRFAR and glutamine to IGP, AICAR and glutamate. The HisF subunit catalyzes the cyclization activity that produces IGP and AICAR from PRFAR using the ammonia provided by the HisH subunit. The protein is Imidazole glycerol phosphate synthase subunit HisF of Caulobacter sp. (strain K31).